A 368-amino-acid chain; its full sequence is 3-dehydroquinate synthase (368 aa).

This sequence belongs to the archaeal-type DHQ synthase family.

The enzyme catalyses 2-amino-2,3,7-trideoxy-D-lyxo-hept-6-ulosonate + NAD(+) + H2O = 3-dehydroquinate + NH4(+) + NADH + H(+). Its function is as follows. Catalyzes the oxidative deamination and cyclization of 2-amino-3,7-dideoxy-D-threo-hept-6-ulosonic acid (ADH) to yield 3-dehydroquinate (DHQ), which is fed into the canonical shikimic pathway of aromatic amino acid biosynthesis. The sequence is that of 3-dehydroquinate synthase from Methanobrevibacter smithii (strain ATCC 35061 / DSM 861 / OCM 144 / PS).